We begin with the raw amino-acid sequence, 462 residues long: Juvenile hormone epoxide hydrolase (462 aa).

A helical transmembrane segment spans residues Ile-4–Leu-24. Asp-227 acts as the Nucleophile in catalysis. The active-site Proton donor is the Tyr-372. Catalysis depends on His-428, which acts as the Proton acceptor.

This sequence belongs to the peptidase S33 family.

It localises to the microsome membrane. The protein localises to the endoplasmic reticulum membrane. The catalysed reaction is cis-stilbene oxide + H2O = (1R,2R)-hydrobenzoin. It carries out the reaction 1-(4-methoxyphenyl)-N-methyl-N-[(3-methyloxetan-3-yl)methyl]methanamine + H2O = 2-{[(4-methoxybenzyl)(methyl)amino]methyl}-2-methylpropane-1,3-diol. In terms of biological role, catalyzes juvenile hormone hydrolysis. This Manduca sexta (Tobacco hawkmoth) protein is Juvenile hormone epoxide hydrolase.